The following is a 669-amino-acid chain: UvrABC system protein B (669 aa).

Residues 26-183 (TNFHAGIAKQ…RHLTELQYTR (158 aa)) form the Helicase ATP-binding domain. Position 39-46 (39-46 (GVTGSGKT)) interacts with ATP. Residues 92 to 115 (YYDYYQPEAYVPASDTFIEKDSSI) carry the Beta-hairpin motif. The Helicase C-terminal domain maps to 431–597 (QVDDLISQIN…SVVRPISDIL (167 aa)). A UVR domain is found at 631-666 (AAQMKMLEQQMYQHARDLEFEDAARIRDQIQRLREA).

It belongs to the UvrB family. In terms of assembly, forms a heterotetramer with UvrA during the search for lesions. Interacts with UvrC in an incision complex.

It is found in the cytoplasm. The UvrABC repair system catalyzes the recognition and processing of DNA lesions. A damage recognition complex composed of 2 UvrA and 2 UvrB subunits scans DNA for abnormalities. Upon binding of the UvrA(2)B(2) complex to a putative damaged site, the DNA wraps around one UvrB monomer. DNA wrap is dependent on ATP binding by UvrB and probably causes local melting of the DNA helix, facilitating insertion of UvrB beta-hairpin between the DNA strands. Then UvrB probes one DNA strand for the presence of a lesion. If a lesion is found the UvrA subunits dissociate and the UvrB-DNA preincision complex is formed. This complex is subsequently bound by UvrC and the second UvrB is released. If no lesion is found, the DNA wraps around the other UvrB subunit that will check the other stand for damage. This Xylella fastidiosa (strain M12) protein is UvrABC system protein B.